The following is an 876-amino-acid chain: Beta-glucosidase 1 (876 aa).

Residues 1 to 17 form the signal peptide; it reads MLMIVQLLVFALGLAVA. Asparagine 22, asparagine 75, asparagine 224, and asparagine 267 each carry an N-linked (GlcNAc...) asparagine glycan. The active site involves aspartate 295. 10 N-linked (GlcNAc...) asparagine glycosylation sites follow: asparagine 332, asparagine 339, asparagine 372, asparagine 389, asparagine 426, asparagine 544, asparagine 585, asparagine 739, asparagine 780, and asparagine 790.

Belongs to the glycosyl hydrolase 3 family.

The enzyme catalyses Hydrolysis of terminal, non-reducing beta-D-glucosyl residues with release of beta-D-glucose.. The protein operates within glycan metabolism; cellulose degradation. In Saccharomycopsis fibuligera (Yeast), this protein is Beta-glucosidase 1 (BGL1).